Here is a 460-residue protein sequence, read N- to C-terminus: Argininosuccinate lyase (460 aa).

The protein belongs to the lyase 1 family. Argininosuccinate lyase subfamily.

It is found in the cytoplasm. The catalysed reaction is 2-(N(omega)-L-arginino)succinate = fumarate + L-arginine. It participates in amino-acid biosynthesis; L-arginine biosynthesis; L-arginine from L-ornithine and carbamoyl phosphate: step 3/3. The protein is Argininosuccinate lyase of Parvibaculum lavamentivorans (strain DS-1 / DSM 13023 / NCIMB 13966).